The primary structure comprises 98 residues: NADH-ubiquinone oxidoreductase chain 4L (98 aa).

Transmembrane regions (helical) follow at residues 1-21, 29-49, and 61-81; these read MPFIYINVLLAYFMSLLGLLI, SLLCLEGMMLSLFIMATLMTL, and IVLLVFAACEAAVGLALLVLI.

It belongs to the complex I subunit 4L family. Core subunit of respiratory chain NADH dehydrogenase (Complex I) which is composed of 45 different subunits.

The protein resides in the mitochondrion inner membrane. It catalyses the reaction a ubiquinone + NADH + 5 H(+)(in) = a ubiquinol + NAD(+) + 4 H(+)(out). Its function is as follows. Core subunit of the mitochondrial membrane respiratory chain NADH dehydrogenase (Complex I) which catalyzes electron transfer from NADH through the respiratory chain, using ubiquinone as an electron acceptor. Part of the enzyme membrane arm which is embedded in the lipid bilayer and involved in proton translocation. The chain is NADH-ubiquinone oxidoreductase chain 4L (MT-ND4L) from Aotus trivirgatus (Three-striped night monkey).